We begin with the raw amino-acid sequence, 644 residues long: N-acetylgalactosaminyltransferase 4 (644 aa).

The Cytoplasmic portion of the chain corresponds to 1-13; it reads MAIKKRYVKRLLR. The helical; Signal-anchor for type II membrane protein transmembrane segment at 14–34 threads the bilayer; it reads KVVLLLVVIVTVSLVTTLVVE. Residues 35–644 are Lumenal-facing; the sequence is RRMKNAAELT…MLDTFYDGLK (610 aa). N-linked (GlcNAc...) asparagine glycans are attached at residues Asn157 and Asn179. The catalytic subdomain A stretch occupies residues 177 to 288; that stretch reads LPNISVIFIF…YNWLPPLIEP (112 aa). Asp218 and Arg249 together coordinate substrate. Asp272 contributes to the Mn(2+) binding site. Substrate is bound at residue Ser273. His274 provides a ligand contact to Mn(2+). The catalytic subdomain B stretch occupies residues 345 to 407; the sequence is PYRSPVMMGG…PCSRVAHIFR (63 aa). Trp376 is a binding site for substrate. His404 is a binding site for Mn(2+). Arg407 contributes to the substrate binding site. The region spanning 496–629 is the Ricin B-type lectin domain; that stretch reads AAGIIQNVAN…GNDRQRWEFG (134 aa). Cys509 and Cys526 are oxidised to a cystine. Residues Asn529 and Asn565 are each glycosylated (N-linked (GlcNAc...) asparagine). Cystine bridges form between Cys556-Cys573 and Cys600-Cys617. N-linked (GlcNAc...) asparagine glycosylation is present at Asn632.

Belongs to the glycosyltransferase 2 family. GalNAc-T subfamily. Requires Mn(2+) as cofactor. In terms of tissue distribution, expressed in developing oocytes and egg chambers. During embryonic stages 9-11, expressed in the primordium of the foregut, midgut and hindgut. During embryonic stages 12-13, shows specific expression in the proventriculus that continues until the end of embryogenesis. In third instar larvae, ubiquitously expressed in wing, eye-antennal, leg and haltere imaginal disks.

It is found in the golgi apparatus membrane. It catalyses the reaction L-seryl-[protein] + UDP-N-acetyl-alpha-D-galactosamine = a 3-O-[N-acetyl-alpha-D-galactosaminyl]-L-seryl-[protein] + UDP + H(+). The enzyme catalyses L-threonyl-[protein] + UDP-N-acetyl-alpha-D-galactosamine = a 3-O-[N-acetyl-alpha-D-galactosaminyl]-L-threonyl-[protein] + UDP + H(+). It functions in the pathway protein modification; protein glycosylation. Functionally, glycopeptide transferase involved in O-linked oligosaccharide biosynthesis, which catalyzes the transfer of an N-acetyl-D-galactosamine residue to an already glycosylated peptide. In contrast to other proteins of the family, it does not act as a peptide transferase that transfers GalNAc onto serine or threonine residue on the protein receptor, but instead requires the prior addition of a GalNAc on a peptide before adding additional GalNAc moieties. Some peptide transferase activity is however not excluded, considering that its appropriate peptide substrate may remain unidentified. Prefers the diglycosylated Muc5AC-3/13 as substrate. The protein is N-acetylgalactosaminyltransferase 4 of Drosophila melanogaster (Fruit fly).